The sequence spans 69 residues: Large ribosomal subunit protein bL31 (69 aa).

Zn(2+) contacts are provided by C17, C19, C37, and C40.

It belongs to the bacterial ribosomal protein bL31 family. Type A subfamily. As to quaternary structure, part of the 50S ribosomal subunit. Zn(2+) is required as a cofactor.

In terms of biological role, binds the 23S rRNA. The polypeptide is Large ribosomal subunit protein bL31 (Clostridium botulinum (strain Eklund 17B / Type B)).